The primary structure comprises 644 residues: Exoribonuclease 2 (644 aa).

The RNB domain occupies 189-516 (RQDLTALNFV…NHRLLKAVIK (328 aa)). Residues 561 to 643 (NTRFAAEIID…ETRSIIARPA (83 aa)) enclose the S1 motif domain.

Belongs to the RNR ribonuclease family. RNase II subfamily.

It localises to the cytoplasm. It catalyses the reaction Exonucleolytic cleavage in the 3'- to 5'-direction to yield nucleoside 5'-phosphates.. In terms of biological role, involved in mRNA degradation. Hydrolyzes single-stranded polyribonucleotides processively in the 3' to 5' direction. The polypeptide is Exoribonuclease 2 (Salmonella newport (strain SL254)).